We begin with the raw amino-acid sequence, 250 residues long: 5-oxoprolinase subunit A (250 aa).

This sequence belongs to the LamB/PxpA family. Forms a complex composed of PxpA, PxpB and PxpC.

It carries out the reaction 5-oxo-L-proline + ATP + 2 H2O = L-glutamate + ADP + phosphate + H(+). In terms of biological role, catalyzes the cleavage of 5-oxoproline to form L-glutamate coupled to the hydrolysis of ATP to ADP and inorganic phosphate. The chain is 5-oxoprolinase subunit A from Thermus thermophilus (strain ATCC 27634 / DSM 579 / HB8).